The sequence spans 97 residues: Signal recognition particle 19 kDa protein (97 aa).

It belongs to the SRP19 family. In terms of assembly, part of the signal recognition particle protein translocation system, which is composed of SRP and FtsY. Archaeal SRP consists of a 7S RNA molecule of 300 nucleotides and two protein subunits: SRP54 and SRP19.

It is found in the cytoplasm. Its function is as follows. Involved in targeting and insertion of nascent membrane proteins into the cytoplasmic membrane. Binds directly to 7S RNA and mediates binding of the 54 kDa subunit of the SRP. In Methanocella arvoryzae (strain DSM 22066 / NBRC 105507 / MRE50), this protein is Signal recognition particle 19 kDa protein.